The sequence spans 507 residues: BPI fold-containing family C protein (507 aa).

Positions 1–23 (MCTKTIPVLWGCFLLWNLYVSSS) are cleaved as a signal peptide. N-linked (GlcNAc...) asparagine glycosylation is found at asparagine 79, asparagine 92, and asparagine 113. Cysteine 161 and cysteine 200 are disulfide-bonded. Asparagine 213, asparagine 225, asparagine 257, asparagine 301, asparagine 355, asparagine 372, and asparagine 415 each carry an N-linked (GlcNAc...) asparagine glycan.

The protein belongs to the BPI/LBP/Plunc superfamily. BPI/LBP family. As to expression, detected in the basal layer of the epidermis from inflammatory skin from psoriasis patients, but not in normal skin.

Its subcellular location is the secreted. This Homo sapiens (Human) protein is BPI fold-containing family C protein (BPIFC).